The primary structure comprises 301 residues: MSVRELVVLGTASQVPTRHRNHNGYLLRWDGEGILFDPGEGTQRQMLRAGVAAHDLHRICVTHFHGDHSLGLAGVIQRINLDRVPHEITAHYPGSGQRFFERLRYATAYRETVALTEAPVAADGVIADTPAYVLETRRLSHPVESFGYRLVEPDGRRMLPERLAAHGIKGPDVGRIQREGAIGGVSLEDVSEVRHGQRFAFVMDTRLCEGVHALAEGCDMLVIESTFLDGDHQLAEDHGHLTAGQAGRVAKDAGVRHLVLTHFSQRYSDPDAFEREARAGGFEGELTVAHDLLRVPVPKRH.

His63, His65, Asp67, His68, His141, Asp204, and His262 together coordinate Zn(2+). The active-site Proton acceptor is Asp67.

This sequence belongs to the RNase Z family. As to quaternary structure, homodimer. Zn(2+) is required as a cofactor.

The catalysed reaction is Endonucleolytic cleavage of RNA, removing extra 3' nucleotides from tRNA precursor, generating 3' termini of tRNAs. A 3'-hydroxy group is left at the tRNA terminus and a 5'-phosphoryl group is left at the trailer molecule.. Functionally, zinc phosphodiesterase, which displays some tRNA 3'-processing endonuclease activity. Probably involved in tRNA maturation, by removing a 3'-trailer from precursor tRNA. The chain is Ribonuclease Z from Streptomyces avermitilis (strain ATCC 31267 / DSM 46492 / JCM 5070 / NBRC 14893 / NCIMB 12804 / NRRL 8165 / MA-4680).